A 423-amino-acid polypeptide reads, in one-letter code: Putative gustatory receptor 97a (423 aa).

Topologically, residues 1–31 (MRFLRRQTRRLRSIWQRSLPVRFRRGKLHTQ) are cytoplasmic. The chain crosses the membrane as a helical span at residues 32–52 (LVTICLYATVFLNILYGVYLG). Over 53-65 (RFSFRRKKFVFSK) the chain is Extracellular. Residues 66 to 86 (GLTIYSLFVATFFALFYIWNI) traverse the membrane as a helical segment. Residues 87–99 (YNEISTGQINLRD) lie on the Cytoplasmic side of the membrane. Residues 100-120 (TIGIYCYMNVCVCLFNYVTQW) form a helical membrane-spanning segment. At 121–152 (EKTLQIIRFQNSVPLFKVLDSLDISAMIVWRA) the chain is on the extracellular side. The chain crosses the membrane as a helical span at residues 153 to 173 (FIYGLLKIVFCPLITYITLIL). Residues 174–200 (YHRRSISESQWTSVTTTKTMLPLIVSN) lie on the Cytoplasmic side of the membrane. A helical membrane pass occupies residues 201 to 221 (QINNCFFGGLVLANLIFAAVN). Residues 222–278 (RKLHGIVKEANMLQSPVQMNLHKPYYRMRRFCELADLLDELARKYGFTASRSKNYLR) are Extracellular-facing. The chain crosses the membrane as a helical span at residues 279–299 (FTDWSMVLSMLMNLLGITMGC). Over 300–317 (YNQYLAIADHYINEEPFD) the chain is Cytoplasmic. A helical membrane pass occupies residues 318 to 338 (LFLAIVLVVFLAVPFLELVMV). At 339–423 (ARISNQTLTR…SDLTLRFSLK (85 aa)) the chain is on the extracellular side. Asparagine 343 and asparagine 393 each carry an N-linked (GlcNAc...) asparagine glycan.

This sequence belongs to the insect chemoreceptor superfamily. Gustatory receptor (GR) family. Gr22e subfamily. In larvae, is expressed in neurons of the terminal external chemosensory organ.

The protein resides in the cell membrane. Functionally, probable gustatory receptor which mediates acceptance or avoidance behavior, depending on its substrates. The chain is Putative gustatory receptor 97a (Gr97a) from Drosophila melanogaster (Fruit fly).